A 456-amino-acid polypeptide reads, in one-letter code: Bifunctional protein GlmU (456 aa).

Residues 1 to 231 form a pyrophosphorylase region; sequence MERTCLAIIL…EEELTGCNTR (231 aa). UDP-N-acetyl-alpha-D-glucosamine is bound by residues 10–13, K24, Q77, and 82–83; these read LAAG and GT. D107 provides a ligand contact to Mg(2+). UDP-N-acetyl-alpha-D-glucosamine contacts are provided by G143, E157, N172, and N229. Residue N229 coordinates Mg(2+). The tract at residues 232–252 is linker; sequence AELAYIERLWQQRRRQELMLA. The interval 253-456 is N-acetyltransferase; that stretch reads GVSMVAPETV…AARKKVKAAE (204 aa). UDP-N-acetyl-alpha-D-glucosamine contacts are provided by R318 and K336. H348 serves as the catalytic Proton acceptor. UDP-N-acetyl-alpha-D-glucosamine is bound by residues Y351 and N362. Residues A365, 371 to 372, S390, S408, and R425 contribute to the acetyl-CoA site; that span reads NY.

This sequence in the N-terminal section; belongs to the N-acetylglucosamine-1-phosphate uridyltransferase family. The protein in the C-terminal section; belongs to the transferase hexapeptide repeat family. In terms of assembly, homotrimer. Requires Mg(2+) as cofactor.

The protein resides in the cytoplasm. It catalyses the reaction alpha-D-glucosamine 1-phosphate + acetyl-CoA = N-acetyl-alpha-D-glucosamine 1-phosphate + CoA + H(+). It carries out the reaction N-acetyl-alpha-D-glucosamine 1-phosphate + UTP + H(+) = UDP-N-acetyl-alpha-D-glucosamine + diphosphate. The protein operates within nucleotide-sugar biosynthesis; UDP-N-acetyl-alpha-D-glucosamine biosynthesis; N-acetyl-alpha-D-glucosamine 1-phosphate from alpha-D-glucosamine 6-phosphate (route II): step 2/2. It participates in nucleotide-sugar biosynthesis; UDP-N-acetyl-alpha-D-glucosamine biosynthesis; UDP-N-acetyl-alpha-D-glucosamine from N-acetyl-alpha-D-glucosamine 1-phosphate: step 1/1. It functions in the pathway bacterial outer membrane biogenesis; LPS lipid A biosynthesis. Its function is as follows. Catalyzes the last two sequential reactions in the de novo biosynthetic pathway for UDP-N-acetylglucosamine (UDP-GlcNAc). The C-terminal domain catalyzes the transfer of acetyl group from acetyl coenzyme A to glucosamine-1-phosphate (GlcN-1-P) to produce N-acetylglucosamine-1-phosphate (GlcNAc-1-P), which is converted into UDP-GlcNAc by the transfer of uridine 5-monophosphate (from uridine 5-triphosphate), a reaction catalyzed by the N-terminal domain. This Sinorhizobium fredii (strain NBRC 101917 / NGR234) protein is Bifunctional protein GlmU.